Here is a 403-residue protein sequence, read N- to C-terminus: Zinc finger HIT domain-containing protein 2 (403 aa).

M1 carries the N-acetylmethionine modification. Residues C7, C10, C22, C25, C30, C34, H38, and C41 each coordinate Zn(2+). The HIT-type zinc finger occupies 7 to 41 (CGFCPAGEVQPARYTCPRCNAPYCSLRCYRTHGTC). A disordered region spans residues 72–98 (RQQRETEDEPGEAGLSSGPAPGGLSGL). T161 is modified (phosphothreonine).

As to quaternary structure, interacts (via HIT-type zinc finger) with RUVBL2 in the presence of ATP or ADP; shows a stronger interaction in the presence of ADP. In terms of tissue distribution, low expression in most tissues; highly expressed in testis.

Functionally, may act as a bridging factor mediating the interaction between the R2TP/Prefoldin-like (R2TP/PFDL) complex and U5 small nuclear ribonucleoprotein (U5 snRNP). Required for the interaction of R2TP complex subunit RPAP3 and prefoldin-like subunit URI1 with U5 snRNP proteins EFTUD2 and PRPF8. May play a role in regulating the composition of the U5 snRNP complex. The protein is Zinc finger HIT domain-containing protein 2 (ZNHIT2) of Homo sapiens (Human).